The following is a 325-amino-acid chain: tRNA-dihydrouridine(16) synthase (325 aa).

Residues 12 to 14 (PMQ) and Gln73 contribute to the FMN site. Cys103 (proton donor) is an active-site residue. Residues Lys144, 205–207 (NGE), and 229–230 (GR) each bind FMN.

It belongs to the Dus family. DusC subfamily. FMN is required as a cofactor.

It carries out the reaction 5,6-dihydrouridine(16) in tRNA + NADP(+) = uridine(16) in tRNA + NADPH + H(+). The catalysed reaction is 5,6-dihydrouridine(16) in tRNA + NAD(+) = uridine(16) in tRNA + NADH + H(+). Catalyzes the synthesis of 5,6-dihydrouridine (D), a modified base found in the D-loop of most tRNAs, via the reduction of the C5-C6 double bond in target uridines. Specifically modifies U16 in tRNAs. This is tRNA-dihydrouridine(16) synthase from Haemophilus ducreyi (strain 35000HP / ATCC 700724).